The primary structure comprises 576 residues: Tudor and KH domain-containing protein homolog (576 aa).

Residues 40–60 form a disordered region; that stretch reads EEADSGGQRPASGIRGQTEEQ. KH domains lie at 65-127 and 136-199; these read EVCL…RALL and VVKV…RKML. Over residues 209-224 the composition is skewed to basic and acidic residues; sequence LVRSMEEVEQRREPRR. The disordered stretch occupies residues 209 to 253; sequence LVRSMEEVEQRREPRRSPTNSIASSMYSSQTSLSSHTQPRDKLMA. Low complexity predominate over residues 232-243; the sequence is SSMYSSQTSLSS. In terms of domain architecture, Tudor spans 310–375; sequence APYVGQIVAA…CELRTDFLTL (66 aa). The tract at residues 556–576 is disordered; it reads ATDLENGNNNNASTTNGASAH. A compositionally biased stretch (low complexity) spans 561–576; that stretch reads NGNNNNASTTNGASAH.

It belongs to the Tdrkh family. As to quaternary structure, interacts (via C-terminus) with AGO3 (via the N-terminal region when symmetrically methylated on arginine residues); this interaction is RNA-independent and may be required for AGO3 localization to the nuage. Interacts (via Tudor domain) with piwi (via N-terminus). Interacts with tral and me31B. Ovaries (at protein level). Expressed in the ovary and testis.

The protein resides in the cytoplasm. It localises to the nucleus. Its subcellular location is the cytoplasmic ribonucleoprotein granule. Its function is as follows. Involved in the piwi-interacting RNA (piRNA) metabolic process, which mediates the repression of transposable elements during meiosis by forming complexes composed of piRNAs and Piwi proteins, and governs the methylation and subsequent repression of transposons which is essential for germline integrity. Likely to act by recruiting Piwi proteins such as AGO3 and piwi to the piRNA biogenesis machinery in the nuage. Required for the final steps of primary piRNA biogenesis by participating in the 3' end-trimming of piwi-bound intermediates into mature piRNAs. This is Tudor and KH domain-containing protein homolog from Drosophila melanogaster (Fruit fly).